The sequence spans 480 residues: Cytochrome P450 724B1 (480 aa).

Residues 6–26 (LVLAALVILLALLLTLVLSHF) form a helical membrane-spanning segment. C426 is a heme binding site.

It belongs to the cytochrome P450 family. The cofactor is heme. In terms of tissue distribution, ubiquitously expressed at low levels, but preferentially in the internodes and the florets before flowering.

Its subcellular location is the membrane. The catalysed reaction is campesterol + reduced [NADPH--hemoprotein reductase] + O2 = (22S)-22-hydroxycampesterol + oxidized [NADPH--hemoprotein reductase] + H2O + H(+). It functions in the pathway plant hormone biosynthesis; brassinosteroid biosynthesis. In terms of biological role, involved in brassinosteroid biosynthesis. May catalyze a C6-oxidation step and may be involved to supply 6-deoxotyphasterol and typhasterol. Involved in internode elongation and seed development. Catalyzes the conversion of campesterol (CR) to (22S)-22-hydroxycampesterol (22-OHCR, 22-hydroxyCR). In Oryza sativa subsp. japonica (Rice), this protein is Cytochrome P450 724B1.